The primary structure comprises 461 residues: D-phenylhydantoinase (461 aa).

3 residues coordinate a divalent metal cation: His59, His61, and Lys151. Lys151 is subject to N6-carboxylysine. Tyr156 is a substrate binding site. 2 residues coordinate a divalent metal cation: His182 and His239. A substrate-binding site is contributed by Ser286. An a divalent metal cation-binding site is contributed by Asp313. Asn335 contributes to the substrate binding site.

It belongs to the metallo-dependent hydrolases superfamily. Hydantoinase/dihydropyrimidinase family. Homotetramer. It depends on a divalent metal cation as a cofactor. In terms of processing, carboxylation allows a single lysine to coordinate two divalent metal cations.

The enzyme catalyses D-5-phenylhydantoin + H2O = N-carbamoyl-D-phenylglycine + H(+). In terms of biological role, catalyzes the stereospecific hydrolysis of the cyclic amide bond of D-hydantoin derivatives with an aromatic side chains at the 5'-position. Has no activity on dihydropyrimidines. The physiological function is unknown. The chain is D-phenylhydantoinase from Escherichia coli (strain SE11).